Consider the following 618-residue polypeptide: Camphene synthase, chloroplastic (618 aa).

The N-terminal 51 residues, 1–51 (MALLSITPLVSRSCLSSSHEIKALRRTIPTLGICRPGKSVAHSINMCLTSV), are a transit peptide targeting the chloroplast. Residues Asp369, Asp373, and Asp521 each coordinate Mg(2+). Residues 369–373 (DDMYD) carry the DDXXD motif motif.

This sequence belongs to the terpene synthase family. Tpsd subfamily. Mg(2+) serves as cofactor. Requires Mn(2+) as cofactor. It depends on K(+) as a cofactor.

It localises to the plastid. It is found in the chloroplast. The catalysed reaction is (2E)-geranyl diphosphate = (1S,4R)-camphene + diphosphate. The protein operates within terpene metabolism; oleoresin biosynthesis. In terms of biological role, involved in defensive oleoresin formation in conifers in response to insect attack or other injury. Involved in monoterpene (C10) olefins biosynthesis. The polypeptide is Camphene synthase, chloroplastic (ag6) (Abies grandis (Grand fir)).